The sequence spans 449 residues: MLSSQTSSIFTVSRLNQTVRLLLEQEMGQVWISGEISNFTQPASGHWYFTLKDDTAQVRCAMFRNSNRRVTFRPQHGQQVLVRANITLYEPRGDYQIIAESMQPAGEGLLQQKYEQLKAKLHAEGLFDQQHKQPLPSPAHCVGVITSKTGAALHDILHVLKRRDPSLPVIIYPTAVQGDDAPGQIVRAIELANTRGECDVLIVGRGGGSLEDLWSFNDERVARAIFASRIPVVSAVGHETDVTIADFVADLRAPTPSAAAEIVSRNQQELLRQIQSAQQRLGMAMDYYLANRSRRFTQIFHRLQQQHPQLRLARQQTALERLRQRMGFALEARIKQATQRQQRVSQRLSQQNPQPRIHRVQSRIQQLEYRLTENIRSRLSEQRERFGNAVTHLEAVSPLATLARGYTVSTTTDGKVLKKIKQVKAGDIMTTRLEDGWLESEVKSVTPGT.

Belongs to the XseA family. Heterooligomer composed of large and small subunits.

The protein resides in the cytoplasm. It catalyses the reaction Exonucleolytic cleavage in either 5'- to 3'- or 3'- to 5'-direction to yield nucleoside 5'-phosphates.. Functionally, bidirectionally degrades single-stranded DNA into large acid-insoluble oligonucleotides, which are then degraded further into small acid-soluble oligonucleotides. This Salmonella typhi protein is Exodeoxyribonuclease 7 large subunit.